A 109-amino-acid chain; its full sequence is Sperm-specific class P protein 19 (109 aa).

The MSP domain maps to 1–109 (MSLTADPPAC…TVTIPMSATA (109 aa)).

As to quaternary structure, monomer. Expressed at higher level in testis.

This is Sperm-specific class P protein 19 (ssp-19) from Caenorhabditis elegans.